The chain runs to 144 residues: MTVGQRIKAIRKERKLTQVQLAEKANLSRSYLADIERDRYNPSLSTLEAVAGALGIQVSAIVGEETLIKEEQAEYNSKEEKDIAKRMEEIRKDLEKSDGLSFSGEPMSQEAVESLMEAMEHIVRQTQRINKKYTPKKYRNDDQE.

The region spanning 7–61 (IKAIRKERKLTQVQLAEKANLSRSYLADIERDRYNPSLSTLEAVAGALGIQVSAI) is the HTH cro/C1-type domain. A DNA-binding region (H-T-H motif) is located at residues 18-37 (QVQLAEKANLSRSYLADIER).

The chain is Immunity repressor protein from Bacillus subtilis (Bacteriophage phi-105).